The primary structure comprises 594 residues: UvrABC system protein C (594 aa).

The region spanning 17-94 (LEPGCYLMKD…IKQYQPRYNI (78 aa)) is the GIY-YIG domain. Residues 199–234 (KTILNHLEERMNKASEQLDFEQAKEYRDMIQHIHNL) enclose the UVR domain.

This sequence belongs to the UvrC family. In terms of assembly, interacts with UvrB in an incision complex.

It localises to the cytoplasm. Its function is as follows. The UvrABC repair system catalyzes the recognition and processing of DNA lesions. UvrC both incises the 5' and 3' sides of the lesion. The N-terminal half is responsible for the 3' incision and the C-terminal half is responsible for the 5' incision. The sequence is that of UvrABC system protein C from Staphylococcus epidermidis (strain ATCC 35984 / DSM 28319 / BCRC 17069 / CCUG 31568 / BM 3577 / RP62A).